Here is a 255-residue protein sequence, read N- to C-terminus: Imidazole glycerol phosphate synthase subunit HisF (255 aa).

Residues Asp-12 and Asp-131 contribute to the active site.

Belongs to the HisA/HisF family. Heterodimer of HisH and HisF.

Its subcellular location is the cytoplasm. The enzyme catalyses 5-[(5-phospho-1-deoxy-D-ribulos-1-ylimino)methylamino]-1-(5-phospho-beta-D-ribosyl)imidazole-4-carboxamide + L-glutamine = D-erythro-1-(imidazol-4-yl)glycerol 3-phosphate + 5-amino-1-(5-phospho-beta-D-ribosyl)imidazole-4-carboxamide + L-glutamate + H(+). It functions in the pathway amino-acid biosynthesis; L-histidine biosynthesis; L-histidine from 5-phospho-alpha-D-ribose 1-diphosphate: step 5/9. In terms of biological role, IGPS catalyzes the conversion of PRFAR and glutamine to IGP, AICAR and glutamate. The HisF subunit catalyzes the cyclization activity that produces IGP and AICAR from PRFAR using the ammonia provided by the HisH subunit. The protein is Imidazole glycerol phosphate synthase subunit HisF of Salinispora tropica (strain ATCC BAA-916 / DSM 44818 / JCM 13857 / NBRC 105044 / CNB-440).